A 203-amino-acid chain; its full sequence is LexA repressor (203 aa).

The segment at residues 28–48 (VRELCDELGFKSPNTAHFHLK) is a DNA-binding region (H-T-H motif). Active-site for autocatalytic cleavage activity residues include Ser122 and Lys159.

The protein belongs to the peptidase S24 family. Homodimer.

The catalysed reaction is Hydrolysis of Ala-|-Gly bond in repressor LexA.. Represses a number of genes involved in the response to DNA damage (SOS response), including recA and lexA. In the presence of single-stranded DNA, RecA interacts with LexA causing an autocatalytic cleavage which disrupts the DNA-binding part of LexA, leading to derepression of the SOS regulon and eventually DNA repair. This chain is LexA repressor, found in Desulfatibacillum aliphaticivorans.